We begin with the raw amino-acid sequence, 325 residues long: Beta-ketoacyl-[acyl-carrier-protein] synthase III (325 aa).

Active-site residues include Cys113 and His250. Residues 251 to 255 are ACP-binding; sequence QANIR. The active site involves Asn280.

This sequence belongs to the thiolase-like superfamily. FabH family. As to quaternary structure, homodimer.

The protein resides in the cytoplasm. The catalysed reaction is malonyl-[ACP] + acetyl-CoA + H(+) = 3-oxobutanoyl-[ACP] + CO2 + CoA. It functions in the pathway lipid metabolism; fatty acid biosynthesis. Catalyzes the condensation reaction of fatty acid synthesis by the addition to an acyl acceptor of two carbons from malonyl-ACP. Catalyzes the first condensation reaction which initiates fatty acid synthesis and may therefore play a role in governing the total rate of fatty acid production. Possesses both acetoacetyl-ACP synthase and acetyl transacylase activities. Its substrate specificity determines the biosynthesis of branched-chain and/or straight-chain of fatty acids. This is Beta-ketoacyl-[acyl-carrier-protein] synthase III from Streptococcus suis (strain 98HAH33).